The sequence spans 132 residues: UPF0299 membrane protein YohJ (132 aa).

4 consecutive transmembrane segments (helical) span residues 8 to 28, 31 to 51, 63 to 83, and 93 to 113; these read IWQY…GIFI, LLPV…VLLA, GCYL…VGVM, and FGPV…VVSW.

Belongs to the UPF0299 family.

The protein resides in the cell inner membrane. This is UPF0299 membrane protein YohJ from Escherichia fergusonii (strain ATCC 35469 / DSM 13698 / CCUG 18766 / IAM 14443 / JCM 21226 / LMG 7866 / NBRC 102419 / NCTC 12128 / CDC 0568-73).